A 378-amino-acid chain; its full sequence is Cobalt-precorrin-5B C(1)-methyltransferase (378 aa).

Belongs to the CbiD family.

The enzyme catalyses Co-precorrin-5B + S-adenosyl-L-methionine = Co-precorrin-6A + S-adenosyl-L-homocysteine. Its pathway is cofactor biosynthesis; adenosylcobalamin biosynthesis; cob(II)yrinate a,c-diamide from sirohydrochlorin (anaerobic route): step 6/10. Its function is as follows. Catalyzes the methylation of C-1 in cobalt-precorrin-5B to form cobalt-precorrin-6A. The sequence is that of Cobalt-precorrin-5B C(1)-methyltransferase from Synechocystis sp. (strain ATCC 27184 / PCC 6803 / Kazusa).